The following is a 383-amino-acid chain: Adaptive-response sensory kinase SasA (383 aa).

The Histidine kinase domain occupies 161-383; sequence MLAHDLRSPL…SFHFTLPVYR (223 aa). H164 bears the Phosphohistidine; by autocatalysis mark.

Homooligomerizes. Interacts with KaiC1. Interacts with KaiC1 and RpaA. Binds to the B-loop in the CI domain of KaiC; SasA and KaiB compete to bind to the CI domain.

It catalyses the reaction ATP + protein L-histidine = ADP + protein N-phospho-L-histidine.. In terms of biological role, member of the two-component regulatory system SasA/RpaA involved in genome-wide circadian gene expression. One of several clock output pathways. Participates in the Kai clock protein complex, the main circadian regulator in cyanobacteria, via its interaction with KaiC. KaiC enhances the autophosphorylation activity of SasA, which then transfers its phosphate group to RpaA to activate it. In addition to its output function, recruits fold-shifted KaiB (KaiB(fs)) to KaiC to cooperatively form the KaiB(6):KaiC(6) complex (independent of SasA kinase activity). Required for robustness of the circadian rhythm of gene expression and is involved in clock output, also required for adaptation to light/dark cycles. Plays an important role in glucose metabolism, important for expression of genes involved in glycolysis, gluconeogenesis, the oxidative pentose phosphate pathway, and glycogen metabolism. Required for heterotrophic growth. Overexpression from the psbAII promoter leads to altered levels of genes involved in carbon metabolism, increased levels of transcripts for clock oscillator genes in the light and the dark, complete loss of glycogen accumulation, decreased levels of metabolites of sugar catabolism and increased levels of amino acids in the light and increased levels of SigE protein. In Synechocystis sp. (strain ATCC 27184 / PCC 6803 / Kazusa), this protein is Adaptive-response sensory kinase SasA.